The primary structure comprises 298 residues: Ethanolamine ammonia-lyase small subunit (298 aa).

The segment at 17 to 37 is disordered; that stretch reads MGQDVPQPVAPSKQEGAKPQC. Valine 210, glutamate 231, and cysteine 261 together coordinate adenosylcob(III)alamin.

It belongs to the EutC family. In terms of assembly, the basic unit is a heterodimer which dimerizes to form tetramers. The heterotetramers trimerize; 6 large subunits form a core ring with 6 small subunits projecting outwards. Requires adenosylcob(III)alamin as cofactor.

The protein resides in the bacterial microcompartment. The enzyme catalyses ethanolamine = acetaldehyde + NH4(+). The protein operates within amine and polyamine degradation; ethanolamine degradation. In terms of biological role, catalyzes the deamination of various vicinal amino-alcohols to oxo compounds. Allows this organism to utilize ethanolamine as the sole source of nitrogen and carbon in the presence of external vitamin B12. This Salmonella paratyphi A (strain ATCC 9150 / SARB42) protein is Ethanolamine ammonia-lyase small subunit.